The chain runs to 861 residues: MEINFKVLSKPIRGSFPSFSPKVSSGASRNKICFPSQHSTGLKFGSQERSWDISSTPKSRVRKDERMKHSSAISAVLTDDNSTMAPLEEDVKTENIGLLNLDPTLEPYLDHFRHRMKRYVDQKMLIEKYEGPLEEFAQGYLKFGFNREDGCIVYREWAPAAQEDEVIGDFNGWNGSNHMMEKDQFGVWSIRIPDVDSKPVIPHNSRVKFRFKHGNGVWVDRIPAWIKYATADATKFAAPYDGVYWDPPPSERYHFKYPRPPKPRAPRIYEAHVGMSSSEPRVNSYREFADDVLPRIKANNYNTVQLMAIMEHSYYGSFGYHVTNFFAVSSRYGNPEDLKYLIDKAHSLGLQVLVDVVHSHASNNVTDGLNGFDIGQGSQESYFHAGERGYHKLWDSRLFNYANWEVLRFLLSNLRWWLEEYNFDGFRFDGITSMLYVHHGINMGFTGNYNEYFSEATDVDAVVYLMLANNLIHKIFPDATVIAEDVSGMPGLGRPVSEGGIGFDYRLAMAIPDKWIDYLKNKNDEDWSMKEVTSSLTNRRYTEKCIAYAESHDQSIVGDKTIAFLLMDKEMYSGMSCLTDASPVVDRGIALHKMIHFFTMALGGEGYLNFMGNEFGHPEWIDFPREGNNWSYDKCRRQWNLADSEHLRYKFMNAFDRAMNSLDEKFSFLASGKQIVSSMDDDNKVVVFERGDLVFVFNFHPKNTYEGYKVGCDLPGKYRVALDSDAWEFGGHGRTGHDVDHFTSPEGIPGVPETNFNGRQIPSKCCLLREHVWLITELMNACQKLKITRQTFVVSYYQQPISRRVTRNLKIRYLQISVTLTNACQKLKFTRQTFLVSYYQQPILRRVTRKLKDSLSTNIST.

2 residues coordinate (1,4-alpha-D-glucosyl)n: tryptophan 173 and lysine 208. The Nucleophile role is filled by aspartate 429. Glutamate 484 acts as the Proton donor in catalysis.

It belongs to the glycosyl hydrolase 13 family. GlgB subfamily. As to quaternary structure, monomer.

It localises to the plastid. The protein resides in the chloroplast. It is found in the amyloplast. The enzyme catalyses Transfers a segment of a (1-&gt;4)-alpha-D-glucan chain to a primary hydroxy group in a similar glucan chain.. It participates in glycan biosynthesis; starch biosynthesis. Its function is as follows. Catalyzes the formation of the alpha-1,6-glucosidic linkages in starch by scission of a 1,4-alpha-linked oligosaccharide from growing alpha-1,4-glucan chains and the subsequent attachment of the oligosaccharide to the alpha-1,6 position. The protein is 1,4-alpha-glucan-branching enzyme (SBE1) of Solanum tuberosum (Potato).